Reading from the N-terminus, the 349-residue chain is Hypoxia-inducible factor 1-alpha inhibitor (349 aa).

Positions 1-14 (MAATAAEVAASGSG) are enriched in low complexity. Positions 1–51 (MAATAAEVAASGSGEAREEAEAPGPAWDESQLRSYSFPTRPIPRLSQSDPR) are disordered. Alanine 2 is modified (N-acetylalanine). The segment at 2-125 (AATAAEVAAS…PRSNREEIKF (124 aa)) is interaction with VHL. Residues 142 to 307 (ERLYLQQTLN…KGAPTPKRIE (166 aa)) form the JmjC domain. 2-oxoglutarate is bound at residue tyrosine 145. Substrate contacts are provided by residues aspartate 152 and 181-183 (QLT). Threonine 196 provides a ligand contact to 2-oxoglutarate. Positions 199 and 201 each coordinate Fe cation. 201–203 (DEQ) contributes to the substrate binding site. Residues asparagine 205 and lysine 214 each coordinate 2-oxoglutarate. 238–239 (RQ) provides a ligand contact to substrate. Histidine 279 provides a ligand contact to Fe cation. Asparagine 294 lines the 2-oxoglutarate pocket. Substrate-binding residues include alanine 300 and asparagine 321.

As to quaternary structure, homodimer; homodimerization is essential for catalytic activity. Interacts with VHL and HIF1A. Part of a complex with VHL, HIF1A and HDAC1 or HDAC2 or HDAC3. Interacts with NFKB1 and NFKBIA. Interacts with NOTCH1, NOTCH2 and NOTCH3 but not with NOTCH4. Interacts with ABPA3. Interacts with TNKS2. Interacts with PPP1R12A. Interacts with UBE3A. Interacts with ASB4. Interacts with ANKS3. Interacts with NECAB3; the interaction is indirect and seems to be mediated by APBA3. It depends on Fe(2+) as a cofactor.

The protein resides in the nucleus. Its subcellular location is the cytoplasm. It localises to the perinuclear region. It carries out the reaction L-asparaginyl-[hypoxia-inducible factor alpha subunit] + 2-oxoglutarate + O2 = (3S)-3-hydroxy-L-asparaginyl-[hypoxia-inducible factor alpha subunit] + succinate + CO2. The catalysed reaction is L-histidyl-[ankyrin-repeat domain protein] + 2-oxoglutarate + O2 = (3S)-3-hydroxy-L-histidyl-[ankyrin-repeat domain protein] + succinate + CO2. It catalyses the reaction L-asparaginyl-[ankyrin-repeat domain protein] + 2-oxoglutarate + O2 = (3S)-3-hydroxy-L-asparaginyl-[ankyrin-repeat domain protein] + succinate + CO2. The enzyme catalyses L-aspartyl-[ankyrin-repeat domain protein] + 2-oxoglutarate + O2 = (3S)-3-hydroxy-L-aspartyl-[ankyrin-repeat domain protein] + succinate + CO2. Its function is as follows. Hydroxylates HIF-1 alpha at 'Asn-799' in the C-terminal transactivation domain (CAD). Functions as an oxygen sensor and, under normoxic conditions, the hydroxylation prevents interaction of HIF-1 with transcriptional coactivators including Cbp/p300-interacting transactivator. Involved in transcriptional repression through interaction with HIF1A, VHL and histone deacetylases. Hydroxylates specific Asn residues within ankyrin repeat domains (ARD) of NFKB1, NFKBIA, NOTCH1, ASB4, PPP1R12A and several other ARD-containing proteins. Also hydroxylates Asp and His residues within ARDs of ANK1 and TNKS2, respectively. Negatively regulates NOTCH1 activity, accelerating myogenic differentiation. Positively regulates ASB4 activity, promoting vascular differentiation. The sequence is that of Hypoxia-inducible factor 1-alpha inhibitor (Hif1an) from Mus musculus (Mouse).